The following is a 473-amino-acid chain: Cysteine--tRNA ligase (473 aa).

Residue cysteine 30 participates in Zn(2+) binding. Positions 32-42 (MTVYDYCHIGH) match the 'HIGH' region motif. 3 residues coordinate Zn(2+): cysteine 213, histidine 238, and glutamate 242. The 'KMSKS' region motif lies at 270-274 (KMSKS). Lysine 273 lines the ATP pocket.

Belongs to the class-I aminoacyl-tRNA synthetase family. Monomer. Zn(2+) serves as cofactor.

The protein localises to the cytoplasm. It catalyses the reaction tRNA(Cys) + L-cysteine + ATP = L-cysteinyl-tRNA(Cys) + AMP + diphosphate. This chain is Cysteine--tRNA ligase, found in Acinetobacter baumannii (strain ACICU).